Reading from the N-terminus, the 69-residue chain is Putative defensin-like protein 312 (69 aa).

The signal sequence occupies residues 1–19 (MSCFSFLVYFLLFIVTKMS). A disulfide bridge links cysteine 45 with cysteine 57.

The protein belongs to the DEFL family.

It is found in the secreted. The sequence is that of Putative defensin-like protein 312 from Arabidopsis thaliana (Mouse-ear cress).